The primary structure comprises 107 residues: Anti-adapter protein IraM (107 aa).

Belongs to the IraM/RssC family.

Its subcellular location is the cytoplasm. In terms of biological role, inhibits RpoS proteolysis by regulating RssB activity, thereby increasing the stability of the sigma stress factor RpoS during magnesium starvation. This is Anti-adapter protein IraM from Escherichia coli O7:K1 (strain IAI39 / ExPEC).